The following is a 344-amino-acid chain: uncharacterized protein (344 aa).

Helical transmembrane passes span 155–175, 181–201, 221–241, 254–274, 291–311, and 319–339; these read IARI…IFLV, WGLG…AYGW, LSFI…VNGF, ISSF…FALL, FTII…AAYV, and ALQN…IGVF.

The protein to M.jannaschii MJ1032.

It localises to the cell membrane. This is an uncharacterized protein from Archaeoglobus fulgidus (strain ATCC 49558 / DSM 4304 / JCM 9628 / NBRC 100126 / VC-16).